A 163-amino-acid polypeptide reads, in one-letter code: Jun dimerization protein 2 (163 aa).

2 disordered regions span residues 1-20 (MMPG…PGLG) and 58-89 (GKRP…AARC). A Glycyl lysine isopeptide (Lys-Gly) (interchain with G-Cter in SUMO2) cross-link involves residue K65. The bZIP domain maps to 72–135 (EERRKRRREK…QQLILMLNRH (64 aa)). Positions 74-96 (RRKRRREKNKVAAARCRNKKKER) are basic motif. The segment at 100–128 (LQRESERLELMNAELKTQIEELKQERQQL) is leucine-zipper. T148 is modified (phosphothreonine; by MAPK8).

Belongs to the bZIP family. ATF subfamily. Forms a homodimer or heterodimer with JUN, JUNB, JUND, CEBPG and ATF2 thereby inhibiting transactivation by JUN, ATF2 and CEBPG. Binds multiple DNA elements such as cAMP-response element (CRE) and TPA response element (TRE) either as homodimer or heterodimer. Interacts with IRF2BP1. Post-translationally, phosphorylation of Thr-148 by MAPK8 in response to different stress conditions such as, UV irradiation, oxidatives stress and anisomycin treatments. Polyubiquitinated; probably by IRF2BP1.

The protein resides in the nucleus. Component of the AP-1 transcription factor that represses transactivation mediated by the Jun family of proteins. Involved in a variety of transcriptional responses associated with AP-1 such as UV-induced apoptosis, cell differentiation, tumorigenesis and antitumogeneris. Can also function as a repressor by recruiting histone deacetylase 3/HDAC3 to the promoter region of JUN. May control transcription via direct regulation of the modification of histones and the assembly of chromatin. This is Jun dimerization protein 2 (JDP2) from Homo sapiens (Human).